Reading from the N-terminus, the 494-residue chain is Aspartyl/glutamyl-tRNA(Asn/Gln) amidotransferase subunit B (494 aa).

This sequence belongs to the GatB/GatE family. GatB subfamily. In terms of assembly, heterotrimer of A, B and C subunits.

It catalyses the reaction L-glutamyl-tRNA(Gln) + L-glutamine + ATP + H2O = L-glutaminyl-tRNA(Gln) + L-glutamate + ADP + phosphate + H(+). It carries out the reaction L-aspartyl-tRNA(Asn) + L-glutamine + ATP + H2O = L-asparaginyl-tRNA(Asn) + L-glutamate + ADP + phosphate + 2 H(+). Its function is as follows. Allows the formation of correctly charged Asn-tRNA(Asn) or Gln-tRNA(Gln) through the transamidation of misacylated Asp-tRNA(Asn) or Glu-tRNA(Gln) in organisms which lack either or both of asparaginyl-tRNA or glutaminyl-tRNA synthetases. The reaction takes place in the presence of glutamine and ATP through an activated phospho-Asp-tRNA(Asn) or phospho-Glu-tRNA(Gln). The polypeptide is Aspartyl/glutamyl-tRNA(Asn/Gln) amidotransferase subunit B (Nitrobacter hamburgensis (strain DSM 10229 / NCIMB 13809 / X14)).